Here is a 1320-residue protein sequence, read N- to C-terminus: Clustered mitochondria protein homolog (1320 aa).

Disordered regions lie at residues 166–241 (QQLE…KQKM), 552–582 (YGSM…TKSI), and 683–708 (LKEK…EDVQ). Residues 185–194 (TEDKEEKETI) show a composition bias toward basic and acidic residues. A compositionally biased stretch (basic residues) spans 202–213 (KKNKHHNKKGNK). Basic and acidic residues-rich tracts occupy residues 226-241 (NEEK…KQKM), 565-575 (QQQKEENEENK), and 683-695 (LKEK…KEGI). One can recognise a Clu domain in the interval 379-649 (KTNRYDINKG…KATPRDPNYT (271 aa)). 5 TPR repeats span residues 955 to 988 (GLDL…YHQV), 997 to 1030 (GACF…TEKT), 1039 to 1072 (VQAY…TDLL), 1081 to 1114 (ASIY…QEFL), and 1123 to 1156 (STTY…LEKE). The tract at residues 1204–1320 (KADQFKKSQP…SKPNKKSSKN (117 aa)) is disordered. Positions 1237–1247 (KPKKSQSKKSK) are enriched in basic residues. Positions 1248–1311 (STNTTTTTNT…PTSSSAADSS (64 aa)) are enriched in low complexity.

This sequence belongs to the CLU family.

The protein resides in the cytoplasm. In terms of biological role, mRNA-binding protein involved in proper cytoplasmic distribution of mitochondria. The protein is Clustered mitochondria protein homolog of Dictyostelium discoideum (Social amoeba).